The primary structure comprises 291 residues: 2-C-methyl-D-erythritol 4-phosphate cytidylyltransferase (291 aa).

The tract at residues 1-23 (MTERDFDTPVETPTVQPAPAQGA) is disordered.

This sequence belongs to the IspD/TarI cytidylyltransferase family. IspD subfamily.

It carries out the reaction 2-C-methyl-D-erythritol 4-phosphate + CTP + H(+) = 4-CDP-2-C-methyl-D-erythritol + diphosphate. It functions in the pathway isoprenoid biosynthesis; isopentenyl diphosphate biosynthesis via DXP pathway; isopentenyl diphosphate from 1-deoxy-D-xylulose 5-phosphate: step 2/6. Catalyzes the formation of 4-diphosphocytidyl-2-C-methyl-D-erythritol from CTP and 2-C-methyl-D-erythritol 4-phosphate (MEP). This Bifidobacterium longum (strain NCC 2705) protein is 2-C-methyl-D-erythritol 4-phosphate cytidylyltransferase.